Reading from the N-terminus, the 265-residue chain is NAD kinase 2 (265 aa).

Residue Asn-51 is the Proton acceptor of the active site. NAD(+) is bound by residues 122 to 123 (NE), Arg-149, Asp-151, 162 to 167 (TAYNKS), Ala-186, and Asn-226.

Belongs to the NAD kinase family. Requires a divalent metal cation as cofactor.

It is found in the cytoplasm. It carries out the reaction NAD(+) + ATP = ADP + NADP(+) + H(+). Its function is as follows. Involved in the regulation of the intracellular balance of NAD and NADP, and is a key enzyme in the biosynthesis of NADP. Catalyzes specifically the phosphorylation on 2'-hydroxyl of the adenosine moiety of NAD to yield NADP. The protein is NAD kinase 2 of Halalkalibacterium halodurans (strain ATCC BAA-125 / DSM 18197 / FERM 7344 / JCM 9153 / C-125) (Bacillus halodurans).